Here is a 268-residue protein sequence, read N- to C-terminus: Malonyl-[acyl-carrier protein] O-methyltransferase (268 aa).

This sequence belongs to the methyltransferase superfamily.

It carries out the reaction malonyl-[ACP] + S-adenosyl-L-methionine = malonyl-[ACP] methyl ester + S-adenosyl-L-homocysteine. It functions in the pathway cofactor biosynthesis; biotin biosynthesis. Converts the free carboxyl group of a malonyl-thioester to its methyl ester by transfer of a methyl group from S-adenosyl-L-methionine (SAM). It allows to synthesize pimeloyl-ACP via the fatty acid synthetic pathway. The sequence is that of Malonyl-[acyl-carrier protein] O-methyltransferase from Prosthecochloris aestuarii (strain DSM 271 / SK 413).